Consider the following 158-residue polypeptide: Acireductone dioxygenase (158 aa).

Fe(2+) is bound by residues H81, H83, E87, and H126. The Ni(2+) site is built by H81, H83, E87, and H126.

This sequence belongs to the acireductone dioxygenase (ARD) family. It depends on Fe(2+) as a cofactor. The cofactor is Ni(2+).

It localises to the cytoplasm. It is found in the nucleus. It carries out the reaction 1,2-dihydroxy-5-(methylsulfanyl)pent-1-en-3-one + O2 = 4-methylsulfanyl-2-oxobutanoate + formate + 2 H(+). It catalyses the reaction 1,2-dihydroxy-5-(methylsulfanyl)pent-1-en-3-one + O2 = 3-(methylsulfanyl)propanoate + CO + formate + 2 H(+). The protein operates within amino-acid biosynthesis; L-methionine biosynthesis via salvage pathway; L-methionine from S-methyl-5-thio-alpha-D-ribose 1-phosphate: step 5/6. In terms of biological role, catalyzes 2 different reactions between oxygen and the acireductone 1,2-dihydroxy-3-keto-5-methylthiopentene (DHK-MTPene) depending upon the metal bound in the active site. Fe-containing acireductone dioxygenase (Fe-ARD) produces formate and 2-keto-4-methylthiobutyrate (KMTB), the alpha-ketoacid precursor of methionine in the methionine recycle pathway. Ni-containing acireductone dioxygenase (Ni-ARD) produces methylthiopropionate, carbon monoxide and formate, and does not lie on the methionine recycle pathway. This Metarhizium robertsii (strain ARSEF 23 / ATCC MYA-3075) (Metarhizium anisopliae (strain ARSEF 23)) protein is Acireductone dioxygenase.